The following is a 397-amino-acid chain: 2-deoxy-scyllo-inosose synthase (397 aa).

NAD(+) is bound by residues Asp41, 71–74 (EPYK), 103–107 (GVIGN), 127–128 (TS), 138–140 (SLK), and 149–150 (KN). Residue Lys140 is part of the active site. Glu182 lines the Co(2+) pocket. The active site involves Glu242. Residues His245 and His261 each coordinate Co(2+).

This sequence belongs to the sugar phosphate cyclases superfamily. DOI synthase family. NAD(+) serves as cofactor. It depends on Co(2+) as a cofactor.

It catalyses the reaction D-glucose 6-phosphate = 2-deoxy-L-scyllo-inosose + phosphate. It functions in the pathway metabolic intermediate biosynthesis; 2-deoxystreptamine biosynthesis; 2-deoxystreptamine from D-glucose 6-phosphate: step 1/4. Its pathway is antibiotic biosynthesis; gentamicin biosynthesis. Its function is as follows. Catalyzes the intramolecular carbocycle formation from D-glucose-6-phosphate to 2-deoxy-scyllo-inosose (DOI). In Micromonospora echinospora (Micromonospora purpurea), this protein is 2-deoxy-scyllo-inosose synthase (gtmA).